A 209-amino-acid polypeptide reads, in one-letter code: ATP-dependent Clp protease proteolytic subunit (209 aa).

Residue Ser-106 is the Nucleophile of the active site. The active site involves His-131.

This sequence belongs to the peptidase S14 family. Fourteen ClpP subunits assemble into 2 heptameric rings which stack back to back to give a disk-like structure with a central cavity, resembling the structure of eukaryotic proteasomes.

It localises to the cytoplasm. The catalysed reaction is Hydrolysis of proteins to small peptides in the presence of ATP and magnesium. alpha-casein is the usual test substrate. In the absence of ATP, only oligopeptides shorter than five residues are hydrolyzed (such as succinyl-Leu-Tyr-|-NHMec, and Leu-Tyr-Leu-|-Tyr-Trp, in which cleavage of the -Tyr-|-Leu- and -Tyr-|-Trp bonds also occurs).. Cleaves peptides in various proteins in a process that requires ATP hydrolysis. Has a chymotrypsin-like activity. Plays a major role in the degradation of misfolded proteins. This Brucella suis biovar 1 (strain 1330) protein is ATP-dependent Clp protease proteolytic subunit.